We begin with the raw amino-acid sequence, 360 residues long: Aminomethyltransferase (360 aa).

It belongs to the GcvT family. As to quaternary structure, the glycine cleavage system is composed of four proteins: P, T, L and H.

It carries out the reaction N(6)-[(R)-S(8)-aminomethyldihydrolipoyl]-L-lysyl-[protein] + (6S)-5,6,7,8-tetrahydrofolate = N(6)-[(R)-dihydrolipoyl]-L-lysyl-[protein] + (6R)-5,10-methylene-5,6,7,8-tetrahydrofolate + NH4(+). Its function is as follows. The glycine cleavage system catalyzes the degradation of glycine. This chain is Aminomethyltransferase, found in Pseudomonas aeruginosa (strain ATCC 15692 / DSM 22644 / CIP 104116 / JCM 14847 / LMG 12228 / 1C / PRS 101 / PAO1).